The primary structure comprises 144 residues: Bacilliredoxin BCE_2233 (144 aa).

Belongs to the bacilliredoxin family.

This Bacillus cereus (strain ATCC 10987 / NRS 248) protein is Bacilliredoxin BCE_2233.